Reading from the N-terminus, the 1579-residue chain is MAP kinase kinase kinase SSK2 (1579 aa).

The tract at residues 1–70 (MSHSDYFNYK…HSTQYFRSPN (70 aa)) is disordered. The segment covering 21-44 (SSKMRQSSSSSSSRLRSESLGRNS) has biased composition (low complexity). Polar residues predominate over residues 45 to 67 (NTTQARVASSPISPGLHSTQYFR). Phosphoserine is present on residues Ser-57, Ser-62, Ser-78, and Ser-118. 2 disordered regions span residues 97–155 (FFHQ…ESEI) and 190–243 (SIMS…GSTT). Residues 104–118 (SGSSSSSARSSRRPS) show a composition bias toward low complexity. The span at 127 to 139 (NPQQSLPKLSTQP) shows a compositional bias: polar residues. Over residues 144-155 (KKVEASKTESEI) the composition is skewed to basic and acidic residues. A Phosphoserine modification is found at Ser-290. A Protein kinase domain is found at 1266 to 1558 (WQKRNFIGGG…AVELLMDPWI (293 aa)). Residues 1272–1280 (IGGGTFGRV) and Lys-1295 contribute to the ATP site. The Proton acceptor role is filled by Asp-1390. Residue Ser-1424 is modified to Phosphoserine.

Belongs to the protein kinase superfamily. STE Ser/Thr protein kinase family. MAP kinase kinase kinase subfamily. Interacts with by SSK1.

The catalysed reaction is L-seryl-[protein] + ATP = O-phospho-L-seryl-[protein] + ADP + H(+). It carries out the reaction L-threonyl-[protein] + ATP = O-phospho-L-threonyl-[protein] + ADP + H(+). Its function is as follows. Kinase involved in a signal transduction pathway that is activated by changes in the osmolarity of the extracellular environment. Activates the PBS2 MAP kinase kinase by phosphorylation. This Saccharomyces cerevisiae (strain ATCC 204508 / S288c) (Baker's yeast) protein is MAP kinase kinase kinase SSK2 (SSK2).